A 454-amino-acid polypeptide reads, in one-letter code: tRNA modification GTPase MnmE (454 aa).

(6S)-5-formyl-5,6,7,8-tetrahydrofolate-binding residues include arginine 23, glutamate 80, and lysine 120. The region spanning 216-377 (GMKVVIAGRP…LRNHLKQSMG (162 aa)) is the TrmE-type G domain. Asparagine 226 lines the K(+) pocket. Residues 226–231 (NAGKSS), 245–251 (TDIAGTT), 270–273 (DTAG), 335–338 (NKAD), and 358–360 (SAR) contribute to the GTP site. Serine 230 contacts Mg(2+). Positions 245, 247, and 250 each coordinate K(+). Threonine 251 lines the Mg(2+) pocket. Residue lysine 454 participates in (6S)-5-formyl-5,6,7,8-tetrahydrofolate binding.

This sequence belongs to the TRAFAC class TrmE-Era-EngA-EngB-Septin-like GTPase superfamily. TrmE GTPase family. Homodimer. Heterotetramer of two MnmE and two MnmG subunits. It depends on K(+) as a cofactor.

The protein resides in the cytoplasm. Its function is as follows. Exhibits a very high intrinsic GTPase hydrolysis rate. Involved in the addition of a carboxymethylaminomethyl (cmnm) group at the wobble position (U34) of certain tRNAs, forming tRNA-cmnm(5)s(2)U34. In Escherichia coli O17:K52:H18 (strain UMN026 / ExPEC), this protein is tRNA modification GTPase MnmE.